The primary structure comprises 603 residues: D-3-phosphoglycerate dehydrogenase 1, chloroplastic (603 aa).

A chloroplast-targeting transit peptide spans 1-54 (MSATAAASSSIAVATNSLRNVTLSSRSPLPSAISVAFPSRGRNTLQRRLVLVSC). Residues 210 to 211 (KV), aspartate 230, 289 to 291 (VAR), and aspartate 315 contribute to the NAD(+) site. Arginine 291 is a catalytic residue. The active site involves glutamate 320. The active-site Proton donor is histidine 339. 339–342 (HLGA) contacts NAD(+). An ACT domain is found at 531–603 (IILCRQVDQP…AVEEFVFLKL (73 aa)).

Belongs to the D-isomer specific 2-hydroxyacid dehydrogenase family. In terms of tissue distribution, ubiquitous, but highly expressed in roots. Expressed in vasculature, root and shoot meristems, distal part of cotyledons and leaves, anther, stigma and pollen grains. Detected at the tip of the cotyledons in late embryos.

Its subcellular location is the plastid. It is found in the chloroplast. The catalysed reaction is (2R)-3-phosphoglycerate + NAD(+) = 3-phosphooxypyruvate + NADH + H(+). It functions in the pathway amino-acid biosynthesis; L-serine biosynthesis; L-serine from 3-phospho-D-glycerate: step 1/3. Partially inhibited by 5 mM serine. In terms of biological role, involved in the plastidial phosphorylated pathway of serine biosynthesis (PPSB). Required for mature pollen development. This is D-3-phosphoglycerate dehydrogenase 1, chloroplastic (PGDH1) from Arabidopsis thaliana (Mouse-ear cress).